Consider the following 219-residue polypeptide: Octanoyltransferase (219 aa).

Positions 32-207 constitute a BPL/LPL catalytic domain; the sequence is ADSGDEIWLL…HLVRQLGYAQ (176 aa). Substrate-binding positions include 71–78, 138–140, and 151–153; these read RGGQVTYH, SLG, and GLA. The active-site Acyl-thioester intermediate is Cys-169.

Belongs to the LipB family.

Its subcellular location is the cytoplasm. The catalysed reaction is octanoyl-[ACP] + L-lysyl-[protein] = N(6)-octanoyl-L-lysyl-[protein] + holo-[ACP] + H(+). It functions in the pathway protein modification; protein lipoylation via endogenous pathway; protein N(6)-(lipoyl)lysine from octanoyl-[acyl-carrier-protein]: step 1/2. Its function is as follows. Catalyzes the transfer of endogenously produced octanoic acid from octanoyl-acyl-carrier-protein onto the lipoyl domains of lipoate-dependent enzymes. Lipoyl-ACP can also act as a substrate although octanoyl-ACP is likely to be the physiological substrate. In Stutzerimonas stutzeri (strain A1501) (Pseudomonas stutzeri), this protein is Octanoyltransferase.